Here is a 382-residue protein sequence, read N- to C-terminus: MTVLIQGAGIAGLALAREFTKAGIDWLLVERASEIRPIGTGITLASNALTALSSTLDLDRLFRRGMPLAGINVYAHDGSMLMSMPSSLGGSSRGGLALQRHELHAALLEGLDESRIRVGVSIVQILDGLDHERVTLSDGTVHDCSLVVGADGIRSSVRRYVWPEATLRHSGETCWRLVVPHRLEDAELAGEVWGHGKRLGFIQISPREMYVYATLKVRREEPEDEEGFVTPQRLAAHYADFDGIGASIARLIPSATTLVHNDLEELAGASWCRGRVVLIGDAAHAMTPNLGQGAAMALEDAFLLARLWCLAPRAETLILFQQQREARIEFIRKQSWIVGRLGQWESPWSVWLRNTLVRLVPNASRRRLHQRLFTGVGEMAAQ.

Belongs to the 3-hydroxybenzoate 6-hydroxylase family.

The catalysed reaction is 2-heptyl-4(1H)-quinolone + NADH + O2 + H(+) = 2-heptyl-3-hydroxy-4(1H)-quinolone + NAD(+) + H2O. Functionally, involved in the terminal step of the biosynthesis of quinolone which in addition to serve as a potent signal for quorum sensing, chelates iron and promotes the formation of membrane vesicles (MVs). Catalyzes the hydroxylation of 2-heptyl-4-quinolone (C7-HHQ) to yield 2-heptyl-3-hydroxy-4-quinolone (PQS). PqsH is also able to hydroxylate HHQ analogs having alkyl side-chain lengths of 3 (C3-HHQ), 5 (C5-HHQ) and 9 (C9-HHQ) carbons, however catalytic efficiencies are significantly reduced for substrates with alkyl side-chain lengths below 7 carbons. The chain is 2-heptyl-3-hydroxy-4(1H)-quinolone synthase (pqsH) from Pseudomonas aeruginosa (strain UCBPP-PA14).